Here is a 326-residue protein sequence, read N- to C-terminus: Probable cell division protein WhiA (326 aa).

A DNA-binding region (H-T-H motif) is located at residues 275–308; sequence SLDELGHYADPPMTKDAVAGRIRRLLAMADKRAS.

This sequence belongs to the WhiA family.

In terms of biological role, involved in cell division and chromosome segregation. The chain is Probable cell division protein WhiA from Leifsonia xyli subsp. xyli (strain CTCB07).